We begin with the raw amino-acid sequence, 290 residues long: Metallo-beta-lactamase L1 type 3 (290 aa).

The N-terminal stretch at 1–21 is a signal peptide; sequence MRSTLLAFALAVALPAAHTSA. The propeptide occupies 22 to 33; sequence AEVPLPQLRAYT. Zn(2+) is bound by residues His-105, His-107, Asp-109, His-110, and His-181. Residue Asp-205 coordinates substrate. A disulfide bridge links Cys-239 with Cys-267. Position 246 (His-246) interacts with Zn(2+).

This sequence belongs to the metallo-beta-lactamase superfamily. Class-B beta-lactamase family. Homotetramer. Zn(2+) is required as a cofactor.

The protein resides in the periplasm. It catalyses the reaction a beta-lactam + H2O = a substituted beta-amino acid. Inhibited by Hg(2+) or Cu(2+), and by chelating agents such as EDTA and O-phenanthroline. Reduced enzymatic activity in presence of cobalt, nickel, cadmium, and manganese. Its function is as follows. Confers resistance to the different beta-lactams antibiotics (penicillin, cephalosporin and carbapenem) via the hydrolysis of the beta-lactam ring. In Stenotrophomonas maltophilia (Pseudomonas maltophilia), this protein is Metallo-beta-lactamase L1 type 3.